We begin with the raw amino-acid sequence, 156 residues long: Small ribosomal subunit protein uS7 (156 aa).

Belongs to the universal ribosomal protein uS7 family. Part of the 30S ribosomal subunit. Contacts proteins S9 and S11.

One of the primary rRNA binding proteins, it binds directly to 16S rRNA where it nucleates assembly of the head domain of the 30S subunit. Is located at the subunit interface close to the decoding center, probably blocks exit of the E-site tRNA. This Arthrobacter sp. (strain FB24) protein is Small ribosomal subunit protein uS7.